Here is a 955-residue protein sequence, read N- to C-terminus: Kinesin-like protein KIN-14L (955 aa).

The Calponin-homology (CH) domain occupies 19 to 140 (AARRFQAVQW…CILGLKAYHE (122 aa)). A Kinesin motor domain is found at 363-685 (NIRVYCRVRP…LKFAQRVSTV (323 aa)). Residue 445–452 (GQTGSGKT) participates in ATP binding. Residues 692-719 (AHKETREVMHLKEQIENLKRALGTEEWN) are a coiled coil. The interval 878-942 (RKENIPADPR…GKPIENGKKD (65 aa)) is disordered. Positions 894-916 (NNFSHIKSPDTSNAKTMRRQSLT) are enriched in polar residues.

It belongs to the TRAFAC class myosin-kinesin ATPase superfamily. Kinesin family. KIN-14 subfamily.

This is Kinesin-like protein KIN-14L from Arabidopsis thaliana (Mouse-ear cress).